Here is a 140-residue protein sequence, read N- to C-terminus: MNTLRYFDFGAARPVLLLIARIAVVLIFIIFGFPKMMGFDGTVQYMASLGAPMPMLAAIIAVVMEVPAAILIVLGFFTRPLAVLFIFYTLGTAVIGHHYWDMTGDAVGPNMINFWKNVSIAGAFLLLAITGPGAISLDRR.

The Cytoplasmic segment spans residues 1–13 (MNTLRYFDFGAAR). The chain crosses the membrane as a helical span at residues 14 to 34 (PVLLLIARIAVVLIFIIFGFP). Residues 35-56 (KMMGFDGTVQYMASLGAPMPML) lie on the Periplasmic side of the membrane. The helical transmembrane segment at 57–77 (AAIIAVVMEVPAAILIVLGFF) threads the bilayer. Topologically, residues 78–79 (TR) are cytoplasmic. A helical membrane pass occupies residues 80–100 (PLAVLFIFYTLGTAVIGHHYW). Residues 101-116 (DMTGDAVGPNMINFWK) lie on the Periplasmic side of the membrane. Residues 117–137 (NVSIAGAFLLLAITGPGAISL) form a helical membrane-spanning segment. Over 138–140 (DRR) the chain is Cytoplasmic.

Belongs to the DoxX family.

It localises to the cell inner membrane. The chain is Inner membrane protein YphA (yphA) from Escherichia coli (strain K12).